A 790-amino-acid chain; its full sequence is GATOR2 complex protein WDR24 (790 aa).

WD repeat units lie at residues 72 to 112 (SLNL…RNKQ), 118 to 158 (EHKR…SVST), 161 to 201 (GQSE…RCER), 205 to 245 (AHNG…AKEM), 249 to 291 (QTIA…VPAA), and 295 to 338 (EHRD…VERA). At Ser-155 the chain carries Phosphoserine; by AMPK. A phosphoserine mark is found at Ser-470 and Ser-496. Thr-581 carries the phosphothreonine modification. A phosphoserine mark is found at Ser-594 and Ser-598. A C4-type zinc finger spans residues 718–740 (NCSHCKRPMSSRGWVCDRCHRCA). Zn(2+) is bound by residues Cys-719, Cys-722, Cys-733, Cys-736, Cys-743, Cys-746, Cys-757, Cys-760, His-762, His-765, His-768, Cys-779, Cys-783, His-785, and Cys-787. Residues 741 to 790 (SMCAVCHHVVKGLFVWCQGCSHGGHLQHIMKWLEGSSHCPAGCGHLCEYS) form an RING-type; atypical zinc finger.

Belongs to the WD repeat WDR24 family. In terms of assembly, component of the GATOR2 subcomplex, composed of MIOS, SEC13, SEH1L, WDR24 and WDR59. The GATOR2 complex interacts with CASTOR1 and CASTOR2; the interaction is negatively regulated by arginine. The GATOR2 complex interacts with SESN1, SESN2 and SESN3; the interaction is negatively regulated by amino acids. SESN1, SESN2 and SESN3 convey leucine availability via direct interaction with SEH1L and WDR24. In terms of processing, phosphorylation at Ser-155 by AMPK in response to glucose deprivation inactivates WDR24 by promoting interaction with 14-3-3 proteins, such as YWHAG, preventing assembly of the GATOR2 complex. Autoubiquitinated; MIOS is required to prevent autoubiquitination.

The protein resides in the lysosome membrane. It carries out the reaction S-ubiquitinyl-[E2 ubiquitin-conjugating enzyme]-L-cysteine + [acceptor protein]-L-lysine = [E2 ubiquitin-conjugating enzyme]-L-cysteine + N(6)-ubiquitinyl-[acceptor protein]-L-lysine.. The protein operates within protein modification; protein ubiquitination. With respect to regulation, the GATOR2 complex is negatively regulated by the upstream amino acid sensors CASTOR1 and SESN2, which sequester the GATOR2 complex in absence of amino acids. In the presence of abundant amino acids, GATOR2 is released from CASTOR1 and SESN2 and activated. Functionally, catalytic component of the GATOR2 complex, a multiprotein complex that acts as an activator of the amino acid-sensing branch of the mTORC1 signaling pathway. The GATOR2 complex indirectly activates mTORC1 through the inhibition of the GATOR1 subcomplex. GATOR2 probably acts as an E3 ubiquitin-protein ligase toward GATOR1. In the presence of abundant amino acids, the GATOR2 complex mediates ubiquitination of the NPRL2 core component of the GATOR1 complex, leading to GATOR1 inactivation. In the absence of amino acids, GATOR2 is inhibited, activating the GATOR1 complex. In addition to its role in regulation of the mTORC1 complex, promotes the acidification of lysosomes and facilitates autophagic flux. Within the GATOR2 complex, WDR24 constitutes the catalytic subunit that mediates 'Lys-6'-linked ubiquitination of NPRL2. This is GATOR2 complex protein WDR24 from Homo sapiens (Human).